The primary structure comprises 249 residues: 3alpha-hydroxy bile acid-CoA-ester 3-dehydrogenase 1/3 (249 aa).

Residues 15 to 18 (TRGI), E38, E42, and N92 contribute to the NAD(+) site. Residue S144 coordinates substrate. Catalysis depends on proton donor/acceptor residues Y157 and K161. Residues K161 and 190–192 (VDT) contribute to the NAD(+) site.

Belongs to the short-chain dehydrogenases/reductases (SDR) family. As to quaternary structure, homotetramer.

It carries out the reaction a 3alpha-hydroxy bile acid CoA + NAD(+) = a 3-oxo bile acid CoA + NADH + H(+). The enzyme catalyses choloyl-CoA + NAD(+) = 7alpha,12alpha-dihydroxy-3-oxochol-24-oyl-CoA + NADH + H(+). The catalysed reaction is chenodeoxycholoyl-CoA + NAD(+) = 7alpha-hydroxy-3-oxochol-24-oyl-CoA + NADH + H(+). It catalyses the reaction deoxycholoyl-CoA + NAD(+) = 12alpha-hydroxy-3-oxocholan-24-oyl-CoA + NADH + H(+). It carries out the reaction lithocholoyl-CoA + NAD(+) = 3-oxocholan-24-oyl-CoA + NADH + H(+). It functions in the pathway lipid metabolism; bile acid biosynthesis. In terms of biological role, involved in the multi-step bile acid 7alpha-dehydroxylation pathway that transforms primary bile acids to secondary bile acids in the human gut. Catalyzes the oxidation of C3-hydroxyl group of CoA conjugated bile acids generating a C3-oxo bile acid intermediate. Can use choloyl-CoA, chenodeoxycholoyl-CoA, deoxycholoyl-CoA, and lithocholoyl-CoA as substrates with similar efficiency. Highly prefers NAD over NADP as cosubstrate. Also catalyzes the reverse reactions; in vitro, the preferred direction of reaction depends on the pH. Has very little activity with unconjugated (non-CoA) bile acid substrates. The protein is 3alpha-hydroxy bile acid-CoA-ester 3-dehydrogenase 1/3 (baiA1) of Clostridium scindens (strain JCM 10418 / VPI 12708).